Consider the following 762-residue polypeptide: Mediator of RNA polymerase II transcription subunit 15 (762 aa).

Disordered stretches follow at residues 70-102 (AQQAQQDGGGNSSQQGGGGGGGGSGMPDPINAL), 311-330 (GVGHGGPAMQQQQQAGGMGP), and 406-494 (GSGG…LNPQ). The segment covering 76-94 (DGGGNSSQQGGGGGGGGSG) has biased composition (gly residues). Polar residues predominate over residues 465–481 (QRSTIGQSPGGSLNTPG).

The protein belongs to the Mediator complex subunit 15 family. In terms of assembly, component of the Mediator complex.

It localises to the nucleus. Its function is as follows. Component of the Mediator complex, a coactivator involved in the regulated transcription of nearly all RNA polymerase II-dependent genes. Mediator functions as a bridge to convey information from gene-specific regulatory proteins to the basal RNA polymerase II transcription machinery. Mediator is recruited to promoters by direct interactions with regulatory proteins and serves as a scaffold for the assembly of a functional preinitiation complex with RNA polymerase II and the general transcription factors. This Anopheles gambiae (African malaria mosquito) protein is Mediator of RNA polymerase II transcription subunit 15 (MED15).